Consider the following 434-residue polypeptide: Eukaryotic translation initiation factor 3 subunit E (434 aa).

Positions 219–392 (FFNHPKGRDL…GHVVMGTQPL (174 aa)) constitute a PCI domain.

This sequence belongs to the eIF-3 subunit E family. Component of the eukaryotic translation initiation factor 3 (eIF-3) complex. The eIF-3 complex interacts with pix. Interacts with mxt.

It is found in the cytoplasm. Its function is as follows. Component of the eukaryotic translation initiation factor 3 (eIF-3) complex, which is involved in protein synthesis of a specialized repertoire of mRNAs and, together with other initiation factors, stimulates binding of mRNA and methionyl-tRNAi to the 40S ribosome. The eIF-3 complex specifically targets and initiates translation of a subset of mRNAs involved in cell proliferation. This is Eukaryotic translation initiation factor 3 subunit E (eIF3-S6) from Drosophila pseudoobscura pseudoobscura (Fruit fly).